Reading from the N-terminus, the 72-residue chain is Translation initiation factor IF-1 (72 aa).

The 72-residue stretch at 1-72 folds into the S1-like domain; it reads MAKEDSIEMQ…TKGRIVFRAR (72 aa).

Belongs to the IF-1 family. As to quaternary structure, component of the 30S ribosomal translation pre-initiation complex which assembles on the 30S ribosome in the order IF-2 and IF-3, IF-1 and N-formylmethionyl-tRNA(fMet); mRNA recruitment can occur at any time during PIC assembly.

The protein localises to the cytoplasm. Its function is as follows. One of the essential components for the initiation of protein synthesis. Stabilizes the binding of IF-2 and IF-3 on the 30S subunit to which N-formylmethionyl-tRNA(fMet) subsequently binds. Helps modulate mRNA selection, yielding the 30S pre-initiation complex (PIC). Upon addition of the 50S ribosomal subunit IF-1, IF-2 and IF-3 are released leaving the mature 70S translation initiation complex. This Idiomarina loihiensis (strain ATCC BAA-735 / DSM 15497 / L2-TR) protein is Translation initiation factor IF-1.